The following is a 595-amino-acid chain: DNA ligase (595 aa).

NAD(+) contacts are provided by residues Asp32–Asp36, Ser81–Leu82, and Glu113. The active-site N6-AMP-lysine intermediate is the Lys115. Arg136, Glu178, Lys296, and Lys320 together coordinate NAD(+). 4 residues coordinate Zn(2+): Cys414, Cys417, Cys432, and Cys438.

The protein belongs to the NAD-dependent DNA ligase family. LigA subfamily. Mg(2+) is required as a cofactor. The cofactor is Mn(2+).

The catalysed reaction is NAD(+) + (deoxyribonucleotide)n-3'-hydroxyl + 5'-phospho-(deoxyribonucleotide)m = (deoxyribonucleotide)n+m + AMP + beta-nicotinamide D-nucleotide.. In terms of biological role, DNA ligase that catalyzes the formation of phosphodiester linkages between 5'-phosphoryl and 3'-hydroxyl groups in double-stranded DNA using NAD as a coenzyme and as the energy source for the reaction. It is essential for DNA replication and repair of damaged DNA. This chain is DNA ligase, found in Blochmanniella pennsylvanica (strain BPEN).